Here is a 408-residue protein sequence, read N- to C-terminus: Sporulation integral membrane protein YlbJ (408 aa).

8 helical membrane-spanning segments follow: residues 6 to 26, 43 to 63, 81 to 101, 131 to 151, 214 to 234, 294 to 314, 324 to 344, and 377 to 397; these read INTL…ISHP, VVFP…GFGI, VPGV…PAGA, LFIF…GILL, VTSS…FSVF, IIVS…VAGI, PFFI…MLLW, and LLVQ…IIIF.

The protein resides in the cell membrane. Its function is as follows. Required for spore cortex formation. In Bacillus subtilis (strain 168), this protein is Sporulation integral membrane protein YlbJ (ylbJ).